The primary structure comprises 456 residues: RuvB-like helicase 1 (456 aa).

70–77 (GPPGTGKT) contributes to the ATP binding site.

It belongs to the RuvB family. Forms homohexameric rings. May form a dodecamer with rept made of two stacked hexameric rings. Component of the chromatin remodeling Ino80 complex. Interacts with Myc and rept. Higher expression occurs in primordia of mesoderm, anterior and posterior midgut and cephalic furrow early in gastrulation, as well as in endoderm and mesoderm lineages during germ band extension. Later in development expression is only maintained in endoderm cells. Expressed in thoracic and abdominal segment neural precursors of all embryonic chordotonal organs.

The protein resides in the nucleus. It carries out the reaction ATP + H2O = ADP + phosphate + H(+). Acts as a transcriptional coactivator in Wg signaling caused by altered arm signaling. Pont and rept interfere antagonistically with nuclear arm signaling function, and are required to enhance or reduce arm activity, respectively. Also an essential cofactor for the normal function of Myc; required for cellular proliferation and growth. Functionally, proposed core component of the chromatin remodeling Ino80 complex which is involved in transcriptional regulation, DNA replication and probably DNA repair. This is RuvB-like helicase 1 from Drosophila melanogaster (Fruit fly).